The sequence spans 130 residues: Small ribosomal subunit protein uS8 (130 aa).

The protein belongs to the universal ribosomal protein uS8 family. As to quaternary structure, part of the 30S ribosomal subunit. Contacts proteins S5 and S12.

Its function is as follows. One of the primary rRNA binding proteins, it binds directly to 16S rRNA central domain where it helps coordinate assembly of the platform of the 30S subunit. The sequence is that of Small ribosomal subunit protein uS8 from Tolumonas auensis (strain DSM 9187 / NBRC 110442 / TA 4).